A 256-amino-acid chain; its full sequence is Imidazole glycerol phosphate synthase subunit HisF (256 aa).

Residues D12 and D131 contribute to the active site.

Belongs to the HisA/HisF family. In terms of assembly, heterodimer of HisH and HisF.

Its subcellular location is the cytoplasm. The catalysed reaction is 5-[(5-phospho-1-deoxy-D-ribulos-1-ylimino)methylamino]-1-(5-phospho-beta-D-ribosyl)imidazole-4-carboxamide + L-glutamine = D-erythro-1-(imidazol-4-yl)glycerol 3-phosphate + 5-amino-1-(5-phospho-beta-D-ribosyl)imidazole-4-carboxamide + L-glutamate + H(+). Its pathway is amino-acid biosynthesis; L-histidine biosynthesis; L-histidine from 5-phospho-alpha-D-ribose 1-diphosphate: step 5/9. Its function is as follows. IGPS catalyzes the conversion of PRFAR and glutamine to IGP, AICAR and glutamate. The HisF subunit catalyzes the cyclization activity that produces IGP and AICAR from PRFAR using the ammonia provided by the HisH subunit. In Pseudomonas fluorescens (strain ATCC BAA-477 / NRRL B-23932 / Pf-5), this protein is Imidazole glycerol phosphate synthase subunit HisF.